A 155-amino-acid chain; its full sequence is NADPH-dependent 7-cyano-7-deazaguanine reductase (155 aa).

Cys53 serves as the catalytic Thioimide intermediate. The active-site Proton donor is Asp60. Residues 75-77 (VES) and 94-95 (HE) each bind substrate.

It belongs to the GTP cyclohydrolase I family. QueF type 1 subfamily.

Its subcellular location is the cytoplasm. It catalyses the reaction 7-aminomethyl-7-carbaguanine + 2 NADP(+) = 7-cyano-7-deazaguanine + 2 NADPH + 3 H(+). It functions in the pathway tRNA modification; tRNA-queuosine biosynthesis. Functionally, catalyzes the NADPH-dependent reduction of 7-cyano-7-deazaguanine (preQ0) to 7-aminomethyl-7-deazaguanine (preQ1). This is NADPH-dependent 7-cyano-7-deazaguanine reductase from Ruegeria pomeroyi (strain ATCC 700808 / DSM 15171 / DSS-3) (Silicibacter pomeroyi).